The sequence spans 61 residues: Small ribosomal subunit protein uS14 (61 aa).

Positions Met1–Ala14 are enriched in basic residues. The interval Met1–Glu20 is disordered. Residues Cys24, Cys27, Cys40, and Cys43 each coordinate Zn(2+).

This sequence belongs to the universal ribosomal protein uS14 family. Zinc-binding uS14 subfamily. As to quaternary structure, part of the 30S ribosomal subunit. Contacts proteins S3 and S10. It depends on Zn(2+) as a cofactor.

Binds 16S rRNA, required for the assembly of 30S particles and may also be responsible for determining the conformation of the 16S rRNA at the A site. This chain is Small ribosomal subunit protein uS14, found in Lactobacillus delbrueckii subsp. bulgaricus (strain ATCC 11842 / DSM 20081 / BCRC 10696 / JCM 1002 / NBRC 13953 / NCIMB 11778 / NCTC 12712 / WDCM 00102 / Lb 14).